The chain runs to 240 residues: Aspartate/glutamate leucyltransferase (240 aa).

Belongs to the R-transferase family. Bpt subfamily.

The protein localises to the cytoplasm. The enzyme catalyses N-terminal L-glutamyl-[protein] + L-leucyl-tRNA(Leu) = N-terminal L-leucyl-L-glutamyl-[protein] + tRNA(Leu) + H(+). It catalyses the reaction N-terminal L-aspartyl-[protein] + L-leucyl-tRNA(Leu) = N-terminal L-leucyl-L-aspartyl-[protein] + tRNA(Leu) + H(+). Its function is as follows. Functions in the N-end rule pathway of protein degradation where it conjugates Leu from its aminoacyl-tRNA to the N-termini of proteins containing an N-terminal aspartate or glutamate. The polypeptide is Aspartate/glutamate leucyltransferase (Thiobacillus denitrificans (strain ATCC 25259 / T1)).